Consider the following 420-residue polypeptide: Serine hydroxymethyltransferase (420 aa).

(6S)-5,6,7,8-tetrahydrofolate is bound by residues Leu123 and 127-129 (GHL). Lys232 is modified (N6-(pyridoxal phosphate)lysine). 357 to 359 (SPF) contributes to the (6S)-5,6,7,8-tetrahydrofolate binding site.

It belongs to the SHMT family. In terms of assembly, homodimer. Pyridoxal 5'-phosphate serves as cofactor.

The protein localises to the cytoplasm. The enzyme catalyses (6R)-5,10-methylene-5,6,7,8-tetrahydrofolate + glycine + H2O = (6S)-5,6,7,8-tetrahydrofolate + L-serine. Its pathway is one-carbon metabolism; tetrahydrofolate interconversion. It functions in the pathway amino-acid biosynthesis; glycine biosynthesis; glycine from L-serine: step 1/1. Its function is as follows. Catalyzes the reversible interconversion of serine and glycine with tetrahydrofolate (THF) serving as the one-carbon carrier. This reaction serves as the major source of one-carbon groups required for the biosynthesis of purines, thymidylate, methionine, and other important biomolecules. Also exhibits THF-independent aldolase activity toward beta-hydroxyamino acids, producing glycine and aldehydes, via a retro-aldol mechanism. In Streptococcus pyogenes serotype M4 (strain MGAS10750), this protein is Serine hydroxymethyltransferase.